A 559-amino-acid polypeptide reads, in one-letter code: Thermosome subunit alpha (559 aa).

Positions 536–552 (SGEKKGEKKEGGEEEKS) are enriched in basic and acidic residues. The interval 536–559 (SGEKKGEKKEGGEEEKSSTPSSLE) is disordered.

This sequence belongs to the TCP-1 chaperonin family. In terms of assembly, forms a Heterooligomeric complex of two stacked nine-membered rings; one of alpha and the other of beta subunits.

Molecular chaperone; binds unfolded polypeptides in vitro, and has a weak ATPase activity. The chain is Thermosome subunit alpha (thsA) from Sulfurisphaera tokodaii (strain DSM 16993 / JCM 10545 / NBRC 100140 / 7) (Sulfolobus tokodaii).